Consider the following 262-residue polypeptide: Versicolorin reductase 1 (262 aa).

Positions 21, 67, 94, and 127 each coordinate NADP(+). Active-site proton donor residues include serine 143 and serine 144. Tyrosine 158, lysine 162, isoleucine 191, and threonine 193 together coordinate NADP(+). Tyrosine 158 serves as the catalytic Proton acceptor. The active-site Lowers pKa of active site Tyr is lysine 162.

This sequence belongs to the short-chain dehydrogenases/reductases (SDR) family.

The protein resides in the cytoplasm. Its subcellular location is the cytosol. It carries out the reaction (4S,8R)-2,13,16,20-tetrahydroxy-7,9-dioxapentacyclo[10.8.0.0(3,10).0(4,8).0(14,19)]icosa-1(12),2,5,10,13,16,19-heptaen-18-one + NADPH + H(+) = (4S,8R,16R)-2,13,16,20-tetrahydroxy-7,9-dioxapentacyclo[10.8.0.0(3,10).0(4,8).0(14,19)]icosa-1(12),2,5,10,13,19-hexaen-18-one + NADP(+). It participates in mycotoxin biosynthesis; aflatoxin biosynthesis. In terms of biological role, cytochrome P450 monooxygenase; part of the gene cluster that mediates the biosynthesis of aflatoxins, a group of polyketide-derived furanocoumarins, and part of the most toxic and carcinogenic compounds among the known mycotoxins. The four major aflatoxins produced by A.parasiticus are aflatoxin B1 (AFB1), aflatoxin B2 (AFB2), aflatoxin G1 (AFG1) and aflatoxin G2 (AFG2). Within the aflatoxin pathway, with the cytochrome P450 monooxygenase aflN, the versicolorin reductase aflM, is involved in conversion of VERA to demethylsterigmatocystin (DMST). The biosynthesis of aflatoxins begins with the norsolorinic acid synthase aflC that combines a hexanoyl starter unit produced by the fatty acid synthase aflA/aflB and 7 malonyl-CoA extender units to synthesize the precursor NOR. The second step is the conversion of NOR to averantin and requires the norsolorinic acid ketoreductase aflD, which catalyzes the dehydration of norsolorinic acid to form (1'S)-averantin. The norsolorinic acid reductases aflE and aflF may also play a role in the conversion of NOR to AVN. The cytochrome P450 monooxygenase aflG then catalyzes the hydroxylation of AVN to 5'hydroxyaverantin (HAVN). The next step is performed by the 5'-hydroxyaverantin dehydrogenase aflH that transforms HAVN to 5'-oxoaverantin (OAVN) which is further converted to averufin (AVF) by aflK that plays a dual role in the pathway, as a 5'-oxoaverantin cyclase that mediates conversion of 5'-oxoaverantin, as well as a versicolorin B synthase in a later step in the pathway. The averufin oxidase aflI catalyzes the conversion of AVF to versiconal hemiacetal acetate (VHA). VHA is then the substrate for the versiconal hemiacetal acetate esterase aflJ to yield versiconal (VAL). Versicolorin B synthase aflK then converts VAL to versicolorin B (VERB) by closing the bisfuran ring of aflatoxin which is required for DNA-binding, thus giving to aflatoxin its activity as a mutagen. Then, the activity of the versicolorin B desaturase aflL leads to versicolorin A (VERA). A branch point starts from VERB since it can also be converted to dihydrodemethylsterigmatocystin (DMDHST), probably also by aflL, VERA being a precursor for aflatoxins B1 and G1, and DMDHST for aflatoxins B2 and G2. Next, the versicolorin reductase aflM and the cytochrome P450 monooxygenase aflN are involved in conversion of VERA to demethylsterigmatocystin (DMST). AflX and aflY seem also involved in this step, through probable aflX-mediated epoxide ring-opening step following versicolorin A oxidation and aflY-mediated Baeyer-Villiger oxidation required for the formation of the xanthone ring. The methyltransferase aflO then leads to the modification of DMST to sterigmatocystin (ST), and of DMDHST to dihydrosterigmatocystin (DHST). Both ST and DHST are then substrates of the O-methyltransferase aflP to yield O-methylsterigmatocystin (OMST) and dihydro-O-methylsterigmatocystin (DHOMST), respectively. Finally OMST is converted to aflatoxins B1 and G1, and DHOMST to aflatoxins B2 and G2, via the action of several enzymes including O-methylsterigmatocystin oxidoreductase aflQ, the cytochrome P450 monooxygenase aflU, but also the NADH-dependent flavin oxidoreductase nadA which is specifically required for the synthesis of AFG1. The protein is Versicolorin reductase 1 of Aspergillus parasiticus (strain ATCC 56775 / NRRL 5862 / SRRC 143 / SU-1).